The primary structure comprises 168 residues: Cell division inhibitor SulA (168 aa).

Positions 106–112 (ALQTGNY) are ftsZ binding. Residues 161-168 (KIHSSLYH) form a lon protease binding region.

It belongs to the SulA family. As to quaternary structure, interacts with FtsZ. In terms of processing, is rapidly cleaved and degraded by the Lon protease once DNA damage is repaired.

In terms of biological role, component of the SOS system and an inhibitor of cell division. Accumulation of SulA causes rapid cessation of cell division and the appearance of long, non-septate filaments. In the presence of GTP, binds a polymerization-competent form of FtsZ in a 1:1 ratio, thus inhibiting FtsZ polymerization and therefore preventing it from participating in the assembly of the Z ring. This mechanism prevents the premature segregation of damaged DNA to daughter cells during cell division. The sequence is that of Cell division inhibitor SulA from Serratia marcescens.